Here is a 38-residue protein sequence, read N- to C-terminus: Large ribosomal subunit protein bL36 (38 aa).

The protein belongs to the bacterial ribosomal protein bL36 family.

The sequence is that of Large ribosomal subunit protein bL36 from Thermotoga maritima (strain ATCC 43589 / DSM 3109 / JCM 10099 / NBRC 100826 / MSB8).